Consider the following 548-residue polypeptide: Thermosome subunit alpha (548 aa).

Residues 527–548 (TKPEGGQGGGMPGGMGGMDMGM) form a disordered region. The span at 531–548 (GGQGGGMPGGMGGMDMGM) shows a compositional bias: gly residues.

This sequence belongs to the TCP-1 chaperonin family. As to quaternary structure, forms a Heterooligomeric complex of two stacked eight-membered rings.

Molecular chaperone; binds unfolded polypeptides in vitro, and has a weak ATPase activity. The sequence is that of Thermosome subunit alpha (thsA) from Thermococcus sp. (strain JCM 11816 / KS-1).